We begin with the raw amino-acid sequence, 254 residues long: MNAVITSLLFLSLVGLGYSWKYPRNADQTLWAFRTCQRRESDNNILKKWYTWELPNDEKTHCYVKCVWIHLGLYSKSKKSLRVNKIEKQFTSRGVAIPSDLKSMEGETDGSCKAIYDKTISFFNNNVADLRTAFYGTIEESNKWYSENPDAKPKGTKISKFCKDNNREQGESNCKHACSAYYYRLVDEDFEPIYFRLLEIKGFSNEDIDECIKQTSGRQGCQSSDALYDCLKNKNSAALKAALQILDDQSARTY.

A signal peptide spans 1–19; it reads MNAVITSLLFLSLVGLGYS. Cystine bridges form between C36–C66 and C62–C112. W49 contributes to the thromboxane A2 binding site. W52 is a binding site for leukotriene C4. Y63 contacts thromboxane A2. G136 and K154 together coordinate leukotriene C4. K154 contributes to the thromboxane A2 binding site. 3 cysteine pairs are disulfide-bonded: C162/C178, C174/C221, and C211/C230.

The protein belongs to the PBP/GOBP family.

It localises to the secreted. In terms of biological role, modulates blood feeding of female sandflies on vertebrate species by binding and sequestering different mediators involved in the host response. Binds leukotriene C4, leukotriene D4, leukotriene E4 and U-46619, a stable analog of thromboxane A2. Does not bind histamine or serotonin. Inhibits platelet aggregation induced by low concentrations of collagen in thromboxane A2-dependent manner. This chain is Long form salivary protein D7LC, found in Phlebotomus papatasi (Sandfly).